The primary structure comprises 111 residues: Nucleoid-associated protein lhv_0401 (111 aa).

This sequence belongs to the YbaB/EbfC family. Homodimer.

The protein resides in the cytoplasm. Its subcellular location is the nucleoid. Binds to DNA and alters its conformation. May be involved in regulation of gene expression, nucleoid organization and DNA protection. The chain is Nucleoid-associated protein lhv_0401 from Lactobacillus helveticus (strain DPC 4571).